The following is a 203-amino-acid chain: ATP-dependent Clp protease proteolytic subunit (203 aa).

Residue Ser-107 is the Nucleophile of the active site. His-132 is a catalytic residue.

Belongs to the peptidase S14 family. In terms of assembly, fourteen ClpP subunits assemble into 2 heptameric rings which stack back to back to give a disk-like structure with a central cavity, resembling the structure of eukaryotic proteasomes.

It is found in the cytoplasm. The catalysed reaction is Hydrolysis of proteins to small peptides in the presence of ATP and magnesium. alpha-casein is the usual test substrate. In the absence of ATP, only oligopeptides shorter than five residues are hydrolyzed (such as succinyl-Leu-Tyr-|-NHMec, and Leu-Tyr-Leu-|-Tyr-Trp, in which cleavage of the -Tyr-|-Leu- and -Tyr-|-Trp bonds also occurs).. In terms of biological role, cleaves peptides in various proteins in a process that requires ATP hydrolysis. Has a chymotrypsin-like activity. Plays a major role in the degradation of misfolded proteins. This Shewanella pealeana (strain ATCC 700345 / ANG-SQ1) protein is ATP-dependent Clp protease proteolytic subunit.